Reading from the N-terminus, the 131-residue chain is Large ribosomal subunit protein uL22 (131 aa).

It belongs to the universal ribosomal protein uL22 family. In terms of assembly, part of the 50S ribosomal subunit.

In terms of biological role, this protein binds specifically to 23S rRNA; its binding is stimulated by other ribosomal proteins, e.g. L4, L17, and L20. It is important during the early stages of 50S assembly. It makes multiple contacts with different domains of the 23S rRNA in the assembled 50S subunit and ribosome. The globular domain of the protein is located near the polypeptide exit tunnel on the outside of the subunit, while an extended beta-hairpin is found that lines the wall of the exit tunnel in the center of the 70S ribosome. This chain is Large ribosomal subunit protein uL22, found in Phytoplasma mali (strain AT).